A 353-amino-acid polypeptide reads, in one-letter code: Guanine nucleotide-binding protein subunit alpha (353 aa).

A lipid anchor (N-myristoyl glycine) is attached at Gly-2. Cys-3 carries S-palmitoyl cysteine lipidation. The region spanning Asn-32–Ile-353 is the G-alpha domain. The segment at Lys-35–Thr-48 is G1 motif. GTP contacts are provided by Glu-43, Ser-44, Gly-45, Lys-46, Ser-47, Thr-48, Asp-150, Leu-175, Thr-181, Gly-203, Asn-269, Lys-270, Asp-272, and Ala-325. Mg(2+) is bound at residue Ser-47. Positions Asp-173 to Thr-181 are G2 motif. Position 181 (Thr-181) interacts with Mg(2+). Residues Tyr-196 to Arg-205 form a G3 motif region. The tract at residues Ile-265–Asp-272 is G4 motif. The G5 motif stretch occupies residues Thr-323–Thr-328.

It belongs to the G-alpha family. G(q) subfamily. As to quaternary structure, g proteins are composed of 3 units; alpha, beta and gamma. The alpha chain contains the guanine nucleotide binding site. Requires Mg(2+) as cofactor.

Its function is as follows. Guanine nucleotide-binding proteins (G proteins) are involved as modulators or transducers in various transmembrane signaling systems. Involved in the mating pathway. In Cochliobolus heterostrophus (strain C4 / ATCC 48331 / race T) (Southern corn leaf blight fungus), this protein is Guanine nucleotide-binding protein subunit alpha (CGA1).